The sequence spans 184 residues: Transcription termination/antitermination protein NusG (184 aa).

It belongs to the NusG family.

In terms of biological role, participates in transcription elongation, termination and antitermination. The sequence is that of Transcription termination/antitermination protein NusG from Borreliella burgdorferi (strain ATCC 35210 / DSM 4680 / CIP 102532 / B31) (Borrelia burgdorferi).